An 89-amino-acid chain; its full sequence is Small ribosomal subunit protein uS15 (89 aa).

Belongs to the universal ribosomal protein uS15 family. Part of the 30S ribosomal subunit. Forms a bridge to the 50S subunit in the 70S ribosome, contacting the 23S rRNA.

In terms of biological role, one of the primary rRNA binding proteins, it binds directly to 16S rRNA where it helps nucleate assembly of the platform of the 30S subunit by binding and bridging several RNA helices of the 16S rRNA. Functionally, forms an intersubunit bridge (bridge B4) with the 23S rRNA of the 50S subunit in the ribosome. This is Small ribosomal subunit protein uS15 from Methylobacterium sp. (strain 4-46).